The chain runs to 441 residues: Cysteine desulfurase, mitosomal (441 aa).

Pyridoxal 5'-phosphate contacts are provided by residues 107–108 (AT), asparagine 189, glutamine 217, and 237–239 (SGH). At lysine 240 the chain carries N6-(pyridoxal phosphate)lysine. Pyridoxal 5'-phosphate is bound at residue threonine 277. The active-site Cysteine persulfide intermediate is the cysteine 367. Cysteine 367 serves as a coordination point for [2Fe-2S] cluster.

The protein belongs to the class-V pyridoxal-phosphate-dependent aminotransferase family. NifS/IscS subfamily. In terms of assembly, interacts with ISD11. Pyridoxal 5'-phosphate is required as a cofactor.

The protein localises to the mitosome. The catalysed reaction is (sulfur carrier)-H + L-cysteine = (sulfur carrier)-SH + L-alanine. In terms of biological role, catalyzes the removal of elemental sulfur from cysteine to produce alanine. It supplies the inorganic sulfur for iron-sulfur (Fe-S) clusters in mitosomes. In Trachipleistophora hominis (Microsporidian parasite), this protein is Cysteine desulfurase, mitosomal.